The following is a 478-amino-acid chain: Ankyrin repeat and BTB/POZ domain-containing protein 1 (478 aa).

2 ANK repeats span residues 1–31 and 35–64; these read MDTS…EVNV and WDST…RCEA. BTB domains lie at 115–182 and 272–346; these read SDVV…DIGV and PDIC…ELPP. Residues 450–478 are a coiled coil; sequence TVQTYSAIEEAQQQLRALENLLVSIGLDC.

The protein localises to the cytoplasm. In terms of biological role, may act as a mediator of the PTEN growth-suppressive signaling pathway. May play a role in developmental processes. The sequence is that of Ankyrin repeat and BTB/POZ domain-containing protein 1 from Rattus norvegicus (Rat).